We begin with the raw amino-acid sequence, 184 residues long: MQDLSVNEYLRQYIRTVPDWPAAGVQFRDITPLLQDPKVFRVLIDAFVHRYMDRALRPDVVAGLDARGFILGAVVAYELNVGFVPIRKKGKLPFTTVEETYELEYGSATVELHADAVKPGDRVLLIDDLIATGGTMMAGRRLLERLGATVTEGAAIVDLPELGGSSRLRESGLPLYTLVDFAGH.

This sequence belongs to the purine/pyrimidine phosphoribosyltransferase family. In terms of assembly, homodimer.

The protein resides in the cytoplasm. The enzyme catalyses AMP + diphosphate = 5-phospho-alpha-D-ribose 1-diphosphate + adenine. It participates in purine metabolism; AMP biosynthesis via salvage pathway; AMP from adenine: step 1/1. Functionally, catalyzes a salvage reaction resulting in the formation of AMP, that is energically less costly than de novo synthesis. The chain is Adenine phosphoribosyltransferase from Paracidovorax citrulli (strain AAC00-1) (Acidovorax citrulli).